A 239-amino-acid chain; its full sequence is Sugar fermentation stimulation protein homolog (239 aa).

This sequence belongs to the SfsA family.

This is Sugar fermentation stimulation protein homolog from Synechococcus sp. (strain JA-3-3Ab) (Cyanobacteria bacterium Yellowstone A-Prime).